Here is a 77-residue protein sequence, read N- to C-terminus: NCHVEYEKTNRARKHRPCLYDPSQVCFTEHTQSQAAWLCAKPYKVICIFVSFLSFDYKLVQKVCPDYNFQSEHPYFG.

The interval 1–77 (NCHVEYEKTN…NFQSEHPYFG (77 aa)) is v (Cys-rich).

It belongs to the neurexophilin family. In terms of processing, may be proteolytically processed at the boundary between the N-terminal non-conserved and the central conserved domain in neuron-like cells.

It is found in the secreted. Functionally, may be signaling molecules that resemble neuropeptides and that act by binding to alpha-neurexins and possibly other receptors. The sequence is that of Neurexophilin-4 (NXPH4) from Macaca mulatta (Rhesus macaque).